The sequence spans 279 residues: Uroplakin-3b (279 aa).

The N-terminal stretch at 1–26 is a signal peptide; the sequence is MGLPSRQPRLWLLLLVVLGWPQPCLT. Over 27–200 the chain is Lumenal; the sequence is LDLIPYTPRI…DTWPGRRSGD (174 aa). Asparagine 77 is a glycosylation site (N-linked (GlcNAc...) asparagine). A helical transmembrane segment spans residues 201-221; sequence MIIITSILSSLAGLLLLAFLA. Residues 222–279 are Cytoplasmic-facing; the sequence is ASSVRFSSLWWPEEAPEQLRIGSFMGKRYMTHHIPPSEAATLPVGCEPGLERFPSLSP.

Belongs to the uroplakin-3 family. In terms of assembly, heterodimer with uroplakin-1B (UPK1B). In terms of tissue distribution, expression is urothelium-specific.

It is found in the cell membrane. In terms of biological role, component of the asymmetric unit membrane (AUM); a highly specialized biomembrane elaborated by terminally differentiated urothelial cells. May play an important role in AUM-cytoskeleton interaction in terminally differentiated urothelial cells. It also contributes to the formation of urothelial glycocalyx which may play an important role in preventing bacterial adherence. The chain is Uroplakin-3b (UPK3B) from Bos taurus (Bovine).